The sequence spans 750 residues: Photosystem I P700 chlorophyll a apoprotein A1 (750 aa).

The next 8 helical transmembrane spans lie at 70–93 (IFSAHFGQLSIIFLWLSGMYFHGA), 156–179 (LYCTAIGGLVFAALMLFAGWFHYH), 195–219 (LNHHLAGLLGLGSLSWAGHQVHVSL), 291–309 (IAHHHLAIAILFLIAGHMY), 346–369 (WHAQLSINLAMLGSLTIIVAHHMY), 385–411 (LSLFTHHMWIGGFLIVGAAAHAAIFMV), 433–455 (AIISHLNWVCIFLGFHSFGLYIH), and 531–549 (FLVHHIHAFTIHVTVLILL). Cys-573 and Cys-582 together coordinate [4Fe-4S] cluster. 2 helical membrane-spanning segments follow: residues 589 to 610 (HVFLGLFWMYNAISVVIFHFSW) and 664 to 686 (LSAYGLFFLGAHFVWAFSLMFLF). Chlorophyll a' is bound at residue His-675. Residues Met-683 and Tyr-691 each coordinate chlorophyll a. Trp-692 serves as a coordination point for phylloquinone. Residues 724–744 (AVGVTHYLLGGIATTWAFFLA) form a helical membrane-spanning segment.

This sequence belongs to the PsaA/PsaB family. In terms of assembly, the PsaA/B heterodimer binds the P700 chlorophyll special pair and subsequent electron acceptors. PSI consists of a core antenna complex that captures photons, and an electron transfer chain that converts photonic excitation into a charge separation. The eukaryotic PSI reaction center is composed of at least 11 subunits. P700 is a chlorophyll a/chlorophyll a' dimer, A0 is one or more chlorophyll a, A1 is one or both phylloquinones and FX is a shared 4Fe-4S iron-sulfur center. serves as cofactor.

The protein resides in the plastid. It localises to the chloroplast thylakoid membrane. The enzyme catalyses reduced [plastocyanin] + hnu + oxidized [2Fe-2S]-[ferredoxin] = oxidized [plastocyanin] + reduced [2Fe-2S]-[ferredoxin]. In terms of biological role, psaA and PsaB bind P700, the primary electron donor of photosystem I (PSI), as well as the electron acceptors A0, A1 and FX. PSI is a plastocyanin-ferredoxin oxidoreductase, converting photonic excitation into a charge separation, which transfers an electron from the donor P700 chlorophyll pair to the spectroscopically characterized acceptors A0, A1, FX, FA and FB in turn. Oxidized P700 is reduced on the lumenal side of the thylakoid membrane by plastocyanin. The polypeptide is Photosystem I P700 chlorophyll a apoprotein A1 (Lotus japonicus (Lotus corniculatus var. japonicus)).